Here is a 324-residue protein sequence, read N- to C-terminus: NADH-quinone oxidoreductase subunit H (324 aa).

8 helical membrane passes run 11–31 (ILITVGKAVVILLVVVTCGAF), 81–101 (VIFTLAPMIAFTSMLIAFAIV), 114–134 (IGILFFLMMAGLAVYAVLFAG), 154–174 (VSYEVFIGLSLMGVVAQAGSF), 186–206 (LWNVIPQFFGFITFAIAGVAV), 237–257 (FFVGEYIGIVTVSALMVTLFF), 265–285 (LPPFVWFALKTGFFMMMFILI), and 304–324 (VCLPITLLNLLATAAVILYNA).

It belongs to the complex I subunit 1 family. In terms of assembly, NDH-1 is composed of 13 different subunits. Subunits NuoA, H, J, K, L, M, N constitute the membrane sector of the complex.

The protein resides in the cell inner membrane. It carries out the reaction a quinone + NADH + 5 H(+)(in) = a quinol + NAD(+) + 4 H(+)(out). In terms of biological role, NDH-1 shuttles electrons from NADH, via FMN and iron-sulfur (Fe-S) centers, to quinones in the respiratory chain. The immediate electron acceptor for the enzyme in this species is believed to be ubiquinone. Couples the redox reaction to proton translocation (for every two electrons transferred, four hydrogen ions are translocated across the cytoplasmic membrane), and thus conserves the redox energy in a proton gradient. This subunit may bind ubiquinone. The protein is NADH-quinone oxidoreductase subunit H of Pectobacterium atrosepticum (strain SCRI 1043 / ATCC BAA-672) (Erwinia carotovora subsp. atroseptica).